Here is a 209-residue protein sequence, read N- to C-terminus: T-cell surface glycoprotein CD8 beta chain (209 aa).

An N-terminal signal peptide occupies residues 1 to 21 (MRPRMWLLLSAQLAALHGNSV). The region spanning 22–131 (LQQTPAYIMV…TLIFGTGTQL (110 aa)) is the Ig-like V-type domain. The Extracellular segment spans residues 22-169 (LQQTPAYIMV…ETRKGPLCSP (148 aa)). An intrachain disulfide couples Cys41 to Cys115. Asn101 carries an N-linked (GlcNAc...) asparagine glycan. The chain crosses the membrane as a helical span at residues 170–190 (ITLSLLVAGILVLLVSLGVAI). Residues 191–209 (HLYCRQRRARLRFMKQFYK) are Cytoplasmic-facing.

As to quaternary structure, forms disulfide-linked heterodimers with CD8A at the cell surface. Interacts with CD3D; this interaction couples TCR-CD3 with CD8. Interacts with LCK. Post-translationally, phosphorylated as a consequence of T-cell activation. Palmitoylated at the cytoplasmic tail and thereby targets the heterodimer CD8A/CD8B to lipid rafts unlike CD8A homodimers.

It is found in the cell membrane. Its function is as follows. Integral membrane glycoprotein that plays an essential role in the immune response and serves multiple functions in responses against both external and internal offenses. In T-cells, functions primarily as a coreceptor for MHC class I molecule:peptide complex. The antigens presented by class I peptides are derived from cytosolic proteins while class II derived from extracellular proteins. Interacts simultaneously with the T-cell receptor (TCR) and the MHC class I proteins presented by antigen presenting cells (APCs). In turn, recruits the Src kinase LCK to the vicinity of the TCR-CD3 complex. A palmitoylation site in the cytoplasmic tail of CD8B chain contributes to partitioning of CD8 into the plasma membrane lipid rafts where signaling proteins are enriched. Once LCK recruited, it initiates different intracellular signaling pathways by phosphorylating various substrates ultimately leading to lymphokine production, motility, adhesion and activation of cytotoxic T-lymphocytes (CTLs). Additionally, plays a critical role in thymic selection of CD8+ T-cells. This Saimiri sciureus (Common squirrel monkey) protein is T-cell surface glycoprotein CD8 beta chain (CD8B).